Consider the following 128-residue polypeptide: Sulfurtransferase TusD (128 aa).

C78 serves as the catalytic Cysteine persulfide intermediate.

Belongs to the DsrE/TusD family. Heterohexamer, formed by a dimer of trimers. The hexameric TusBCD complex contains 2 copies each of TusB, TusC and TusD. The TusBCD complex interacts with TusE.

The protein localises to the cytoplasm. Functionally, part of a sulfur-relay system required for 2-thiolation of 5-methylaminomethyl-2-thiouridine (mnm(5)s(2)U) at tRNA wobble positions. Accepts sulfur from TusA and transfers it in turn to TusE. The polypeptide is Sulfurtransferase TusD (Escherichia coli O157:H7).